The following is a 263-amino-acid chain: HTH-type transcriptional repressor NanR (263 aa).

A disordered region spans residues 1-25 (MDVMNAFDSQAEDSPTSLGRSLRRR). The HTH gntR-type domain occupies 30 to 98 (KKLSEMVEEE…NGERARVSRP (69 aa)). Positions 58 to 77 (ERELMAFFNVGRPSVREALA) form a DNA-binding region, H-T-H motif.

This sequence belongs to the NanR family.

Functionally, transcriptional repressor that controls expression of the genes required for the catabolism of sialic acids. The protein is HTH-type transcriptional repressor NanR of Salmonella choleraesuis (strain SC-B67).